The primary structure comprises 443 residues: Glutamyl-tRNA reductase (443 aa).

Substrate is bound by residues 49 to 52 (TCNR), serine 109, 114 to 116 (ETQ), and glutamine 120. Residue cysteine 50 is the Nucleophile of the active site. 189 to 194 (GAGDMS) contributes to the NADP(+) binding site.

The protein belongs to the glutamyl-tRNA reductase family. Homodimer.

The catalysed reaction is (S)-4-amino-5-oxopentanoate + tRNA(Glu) + NADP(+) = L-glutamyl-tRNA(Glu) + NADPH + H(+). It functions in the pathway porphyrin-containing compound metabolism; protoporphyrin-IX biosynthesis; 5-aminolevulinate from L-glutamyl-tRNA(Glu): step 1/2. Functionally, catalyzes the NADPH-dependent reduction of glutamyl-tRNA(Glu) to glutamate 1-semialdehyde (GSA). This is Glutamyl-tRNA reductase from Staphylococcus saprophyticus subsp. saprophyticus (strain ATCC 15305 / DSM 20229 / NCIMB 8711 / NCTC 7292 / S-41).